Here is a 51-residue protein sequence, read N- to C-terminus: Mating pheromone Er-23 (51 aa).

5 disulfides stabilise this stretch: Cys-3-Cys-24, Cys-6-Cys-16, Cys-13-Cys-47, Cys-27-Cys-40, and Cys-35-Cys-51.

Its subcellular location is the secreted. Functionally, mating ciliate pheromones (or gamones) are diffusible extracellular communication signals that distinguish different intraspecific classes of cells commonly referred to as 'mating types'. They prepare the latter for conjugation by changing their cell surface properties. In Euplotes raikovi, this protein is Mating pheromone Er-23 (MAT23).